A 129-amino-acid chain; its full sequence is Small ribosomal subunit protein uS11 (129 aa).

This sequence belongs to the universal ribosomal protein uS11 family. Part of the 30S ribosomal subunit. Interacts with proteins S7 and S18. Binds to IF-3.

In terms of biological role, located on the platform of the 30S subunit, it bridges several disparate RNA helices of the 16S rRNA. Forms part of the Shine-Dalgarno cleft in the 70S ribosome. The protein is Small ribosomal subunit protein uS11 of Rhizobium etli (strain CIAT 652).